The primary structure comprises 115 residues: Protein translation factor SUI1 homolog (115 aa).

Belongs to the SUI1 family.

Probably involved in translation. This is Protein translation factor SUI1 homolog (TIF) from Zea mays (Maize).